The primary structure comprises 44 residues: Antifungal protein R (44 aa).

It belongs to the thaumatin family.

Functionally, has antifungal activity. Inhibits the growth of Trichoderma viridae and Candida albicans. In Hordeum vulgare (Barley), this protein is Antifungal protein R.